A 180-amino-acid polypeptide reads, in one-letter code: Nascent polypeptide-associated complex subunit alpha (180 aa).

Residues 16–80 (SKNEKKAREL…AKVDDMNKRI (65 aa)) enclose the NAC-A/B domain. Positions 81–113 (AEAQQQQAQQDALSKAAGETGEAGEEDKSQDAI) are disordered. The segment covering 82-100 (EAQQQQAQQDALSKAAGET) has biased composition (low complexity). In terms of domain architecture, UBA spans 142–179 (LDAKDIDIIVEQTQVSRAKAVKALRVHDGDMVNAIMEL).

The protein belongs to the NAC-alpha family. In terms of assembly, part of the nascent polypeptide-associated complex (NAC), consisting of EGD2 and EGD1. NAC associates with ribosomes via EGD1.

The protein resides in the cytoplasm. It localises to the nucleus. Its function is as follows. Component of the nascent polypeptide-associated complex (NAC), a dynamic component of the ribosomal exit tunnel, protecting the emerging polypeptides from interaction with other cytoplasmic proteins to ensure appropriate nascent protein targeting. The NAC complex also promotes mitochondrial protein import by enhancing productive ribosome interactions with the outer mitochondrial membrane and blocks the inappropriate interaction of ribosomes translating non-secretory nascent polypeptides with translocation sites in the membrane of the endoplasmic reticulum. EGD2 may also be involved in transcription regulation. The protein is Nascent polypeptide-associated complex subunit alpha (EGD2) of Debaryomyces hansenii (strain ATCC 36239 / CBS 767 / BCRC 21394 / JCM 1990 / NBRC 0083 / IGC 2968) (Yeast).